The primary structure comprises 368 residues: tRNA-specific 2-thiouridylase MnmA (368 aa).

ATP contacts are provided by residues Gly11–Ser18 and Met37. The interval Asn97–Asp99 is interaction with target base in tRNA. Cys102 (nucleophile) is an active-site residue. A disulfide bond links Cys102 and Cys199. ATP is bound at residue Gly127. An interaction with tRNA region spans residues Lys149–Gln151. Cys199 acts as the Cysteine persulfide intermediate in catalysis. An interaction with tRNA region spans residues Arg311 to Tyr312.

It belongs to the MnmA/TRMU family. Interacts with TusE.

The protein resides in the cytoplasm. It carries out the reaction S-sulfanyl-L-cysteinyl-[protein] + uridine(34) in tRNA + AH2 + ATP = 2-thiouridine(34) in tRNA + L-cysteinyl-[protein] + A + AMP + diphosphate + H(+). Functionally, catalyzes the 2-thiolation of uridine at the wobble position (U34) of tRNA(Lys), tRNA(Glu) and tRNA(Gln), leading to the formation of s(2)U34, the first step of tRNA-mnm(5)s(2)U34 synthesis. Sulfur is provided by IscS, via a sulfur-relay system. Binds ATP and its substrate tRNAs. The polypeptide is tRNA-specific 2-thiouridylase MnmA (Citrobacter koseri (strain ATCC BAA-895 / CDC 4225-83 / SGSC4696)).